The sequence spans 616 residues: ATP-dependent RNA helicase VAD1 (616 aa).

Residues 1 to 35 (MASSSTLANDDWKQGLAAPPKDLRPQTEDVTATQG) form a disordered region. Positions 36 to 64 (SRFEDFGLRRELLMGIYTAGFERPSPIQE) match the Q motif motif. A Helicase ATP-binding domain is found at 67–238 (IPMALTGRDI…DQHMVQPYEI (172 aa)). 80 to 87 (AKNGTGKT) provides a ligand contact to ATP. The short motif at 186–189 (DEAD) is the DEAD box element. A Helicase C-terminal domain is found at 248 to 408 (GVTQYYAYVE…PIPAVIDPVL (161 aa)). The disordered stretch occupies residues 416-616 (EEERESPPPK…GASQSQQAQA (201 aa)). 3 stretches are compositionally biased toward low complexity: residues 427–441 (AAIA…PQQR), 458–500 (PAAA…NSSP), and 508–523 (YPQQ…AQMQ). Residues 529–545 (PATQPQASAQIPVQGQT) show a composition bias toward polar residues. 2 stretches are compositionally biased toward low complexity: residues 550 to 579 (PRAQ…PNTG) and 606 to 616 (AGASQSQQAQA).

Belongs to the DEAD box helicase family. DDX6/DHH1 subfamily.

The protein resides in the cytoplasm. The protein localises to the P-body. It carries out the reaction ATP + H2O = ADP + phosphate + H(+). Functionally, ATP-dependent RNA helicase involved in mRNA turnover, and more specifically in mRNA decapping. Is involved in G1/S DNA-damage checkpoint recovery, probably through the regulation of the translational status of a subset of mRNAs. May also have a role in translation and mRNA nuclear export. Blocks autophagy in nutrient-rich conditions by, at least partly, binding and repressing the expression of a set of ATG genes, including ATG3, ATG7, ATG8, ATG19, ATG20 and ATG22. VAD1-mediated repression of autophagy is regulated by TOR-dependent phosphorylation of the decapping enzyme DCP2. Regulates multiple virulence-associated genes. Repression of autophagy by VAD1 also regulates the pathogenesis. The sequence is that of ATP-dependent RNA helicase VAD1 from Cryptococcus neoformans var. grubii serotype A (strain H99 / ATCC 208821 / CBS 10515 / FGSC 9487) (Filobasidiella neoformans var. grubii).